Here is a 646-residue protein sequence, read N- to C-terminus: 1-deoxy-D-xylulose-5-phosphate synthase (646 aa).

Thiamine diphosphate is bound by residues H86 and 127-129 (AHS). D158 is a Mg(2+) binding site. Residues 159 to 160 (GA), N188, Y295, and E377 contribute to the thiamine diphosphate site. N188 lines the Mg(2+) pocket.

This sequence belongs to the transketolase family. DXPS subfamily. As to quaternary structure, homodimer. The cofactor is Mg(2+). Thiamine diphosphate serves as cofactor.

The enzyme catalyses D-glyceraldehyde 3-phosphate + pyruvate + H(+) = 1-deoxy-D-xylulose 5-phosphate + CO2. The protein operates within metabolic intermediate biosynthesis; 1-deoxy-D-xylulose 5-phosphate biosynthesis; 1-deoxy-D-xylulose 5-phosphate from D-glyceraldehyde 3-phosphate and pyruvate: step 1/1. Functionally, catalyzes the acyloin condensation reaction between C atoms 2 and 3 of pyruvate and glyceraldehyde 3-phosphate to yield 1-deoxy-D-xylulose-5-phosphate (DXP). This is 1-deoxy-D-xylulose-5-phosphate synthase from Burkholderia cenocepacia (strain HI2424).